A 341-amino-acid chain; its full sequence is Anthranilate phosphoribosyltransferase (341 aa).

5-phospho-alpha-D-ribose 1-diphosphate contacts are provided by residues glycine 79, 82-83 (GD), threonine 87, 89-92 (NIST), 107-115 (KHGNRAASS), and alanine 119. Glycine 79 contributes to the anthranilate binding site. A Mg(2+)-binding site is contributed by serine 91. Asparagine 110 contributes to the anthranilate binding site. Arginine 165 lines the anthranilate pocket. The Mg(2+) site is built by aspartate 224 and glutamate 225.

The protein belongs to the anthranilate phosphoribosyltransferase family. Homodimer. Requires Mg(2+) as cofactor.

The catalysed reaction is N-(5-phospho-beta-D-ribosyl)anthranilate + diphosphate = 5-phospho-alpha-D-ribose 1-diphosphate + anthranilate. The protein operates within amino-acid biosynthesis; L-tryptophan biosynthesis; L-tryptophan from chorismate: step 2/5. Catalyzes the transfer of the phosphoribosyl group of 5-phosphorylribose-1-pyrophosphate (PRPP) to anthranilate to yield N-(5'-phosphoribosyl)-anthranilate (PRA). The chain is Anthranilate phosphoribosyltransferase from Lacticaseibacillus casei (strain BL23) (Lactobacillus casei).